Reading from the N-terminus, the 206-residue chain is Peptidyl-tRNA hydrolase (206 aa).

Tyr-14 contributes to the tRNA binding site. His-19 acts as the Proton acceptor in catalysis. Positions 64, 66, and 112 each coordinate tRNA.

The protein belongs to the PTH family. Monomer.

Its subcellular location is the cytoplasm. The catalysed reaction is an N-acyl-L-alpha-aminoacyl-tRNA + H2O = an N-acyl-L-amino acid + a tRNA + H(+). In terms of biological role, hydrolyzes ribosome-free peptidyl-tRNAs (with 1 or more amino acids incorporated), which drop off the ribosome during protein synthesis, or as a result of ribosome stalling. Catalyzes the release of premature peptidyl moieties from peptidyl-tRNA molecules trapped in stalled 50S ribosomal subunits, and thus maintains levels of free tRNAs and 50S ribosomes. This chain is Peptidyl-tRNA hydrolase, found in Rhodopseudomonas palustris (strain ATCC BAA-98 / CGA009).